Reading from the N-terminus, the 96-residue chain is Co-chaperonin GroES (96 aa).

This sequence belongs to the GroES chaperonin family. Heptamer of 7 subunits arranged in a ring. Interacts with the chaperonin GroEL.

It localises to the cytoplasm. Its function is as follows. Together with the chaperonin GroEL, plays an essential role in assisting protein folding. The GroEL-GroES system forms a nano-cage that allows encapsulation of the non-native substrate proteins and provides a physical environment optimized to promote and accelerate protein folding. GroES binds to the apical surface of the GroEL ring, thereby capping the opening of the GroEL channel. This chain is Co-chaperonin GroES, found in Shewanella frigidimarina (strain NCIMB 400).